Reading from the N-terminus, the 704-residue chain is ATP-dependent zinc metalloprotease FTSH 5, chloroplastic (704 aa).

The transit peptide at 1-58 (MATTSSNPLLLSSNFLGSQIIISAPTPKTTTKSLPFSVISRKRYQISQSEKLMKSLPS) directs the protein to the chloroplast. The N-terminal 18 residues, 59 to 76 (QAALAALLFSSSSPQALA), are a transit peptide targeting the thylakoid. The helical transmembrane segment at 193–213 (FDFIGNLLFPLLAFGGLFYLF) threads the bilayer. 290–297 (GPPGTGKT) serves as a coordination point for ATP. Residue histidine 512 participates in Zn(2+) binding. Glutamate 513 is a catalytic residue. Residues histidine 516 and aspartate 593 each contribute to the Zn(2+) site.

In the N-terminal section; belongs to the AAA ATPase family. The protein in the C-terminal section; belongs to the peptidase M41 family. As to quaternary structure, heterohexamers with FTSH1, FTSH2 and FTSH8. The cofactor is Zn(2+). In terms of tissue distribution, ubiquitous.

The protein resides in the plastid. The protein localises to the chloroplast thylakoid membrane. Part of a complex that function as an ATP-dependent zinc metallopeptidase. Involved in the thylakoid formation and in the removal of damaged D1 in the photosystem II, preventing cell death under high-intensity light conditions. Not involved in the degradation of the light-harvesting complex of photosystem II (LHC II) or in thermotolerance. In Arabidopsis thaliana (Mouse-ear cress), this protein is ATP-dependent zinc metalloprotease FTSH 5, chloroplastic (FTSH5).